The sequence spans 460 residues: UDP-N-acetylmuramate--L-alanine ligase (460 aa).

Gly112–Thr118 lines the ATP pocket.

It belongs to the MurCDEF family.

It localises to the cytoplasm. The enzyme catalyses UDP-N-acetyl-alpha-D-muramate + L-alanine + ATP = UDP-N-acetyl-alpha-D-muramoyl-L-alanine + ADP + phosphate + H(+). It participates in cell wall biogenesis; peptidoglycan biosynthesis. Its function is as follows. Cell wall formation. This Pelobacter propionicus (strain DSM 2379 / NBRC 103807 / OttBd1) protein is UDP-N-acetylmuramate--L-alanine ligase.